We begin with the raw amino-acid sequence, 270 residues long: Putative pyruvate, phosphate dikinase regulatory protein (270 aa).

Residue Gly-149–Thr-156 participates in ADP binding.

The protein belongs to the pyruvate, phosphate/water dikinase regulatory protein family. PDRP subfamily.

The catalysed reaction is N(tele)-phospho-L-histidyl/L-threonyl-[pyruvate, phosphate dikinase] + ADP = N(tele)-phospho-L-histidyl/O-phospho-L-threonyl-[pyruvate, phosphate dikinase] + AMP + H(+). The enzyme catalyses N(tele)-phospho-L-histidyl/O-phospho-L-threonyl-[pyruvate, phosphate dikinase] + phosphate + H(+) = N(tele)-phospho-L-histidyl/L-threonyl-[pyruvate, phosphate dikinase] + diphosphate. Its function is as follows. Bifunctional serine/threonine kinase and phosphorylase involved in the regulation of the pyruvate, phosphate dikinase (PPDK) by catalyzing its phosphorylation/dephosphorylation. The sequence is that of Putative pyruvate, phosphate dikinase regulatory protein from Sphingopyxis alaskensis (strain DSM 13593 / LMG 18877 / RB2256) (Sphingomonas alaskensis).